The chain runs to 542 residues: Exopolysaccharide phosphotransferase CpsY (542 aa).

Residues 522–542 are disordered; that stretch reads SPTVSAPLEDGQTANPAQTAR. Over residues 533-542 the composition is skewed to polar residues; it reads QTANPAQTAR.

The protein belongs to the stealth family.

The protein is Exopolysaccharide phosphotransferase CpsY (cpsY) of Mycobacterium leprae (strain TN).